A 1512-amino-acid polypeptide reads, in one-letter code: DNA (cytosine-5)-methyltransferase 2 (1512 aa).

The segment covering 1–22 (METKVGKQKKRSVDSNDDVSKE) has biased composition (basic and acidic residues). 2 disordered regions span residues 1–35 (METK…RNFK) and 634–678 (AIHE…GNSE). The span at 638–662 (VEEEEIEEDEEEDENEEDDIEEEAV) shows a compositional bias: acidic residues. BAH domains follow at residues 707–841 (ETVA…FSLP) and 909–1026 (TTLK…KQFP). The SAM-dependent MTase C5-type domain occupies 1071–1505 (LATLDIFAGC…RKLKEALYLK (435 aa)). Residue C1176 is part of the active site.

The protein belongs to the class I-like SAM-binding methyltransferase superfamily. C5-methyltransferase family. Expressed at low levels in vegetative and floral organs.

The protein resides in the nucleus. It carries out the reaction a 2'-deoxycytidine in DNA + S-adenosyl-L-methionine = a 5-methyl-2'-deoxycytidine in DNA + S-adenosyl-L-homocysteine + H(+). Its function is as follows. Maintains chromatin CpG methylation that plays a role in genomic imprinting, regulation of embryogenesis and seed viability. Required for proper patterns of CG DNA methylation in dividing cells. This Arabidopsis thaliana (Mouse-ear cress) protein is DNA (cytosine-5)-methyltransferase 2 (MET2).